The chain runs to 274 residues: Ribose-5-phosphate isomerase (274 aa).

The protein belongs to the ribose 5-phosphate isomerase family.

Its subcellular location is the cytoplasm. It catalyses the reaction aldehydo-D-ribose 5-phosphate = D-ribulose 5-phosphate. It participates in carbohydrate degradation; pentose phosphate pathway; D-ribose 5-phosphate from D-ribulose 5-phosphate (non-oxidative stage): step 1/1. This Kluyveromyces lactis (strain ATCC 8585 / CBS 2359 / DSM 70799 / NBRC 1267 / NRRL Y-1140 / WM37) (Yeast) protein is Ribose-5-phosphate isomerase (RKI1).